The chain runs to 95 residues: Co-chaperonin GroES (95 aa).

It belongs to the GroES chaperonin family. Heptamer of 7 subunits arranged in a ring. Interacts with the chaperonin GroEL.

It localises to the cytoplasm. Functionally, together with the chaperonin GroEL, plays an essential role in assisting protein folding. The GroEL-GroES system forms a nano-cage that allows encapsulation of the non-native substrate proteins and provides a physical environment optimized to promote and accelerate protein folding. GroES binds to the apical surface of the GroEL ring, thereby capping the opening of the GroEL channel. This Stenotrophomonas maltophilia (strain R551-3) protein is Co-chaperonin GroES.